The primary structure comprises 335 residues: Methionine import ATP-binding protein MetN 1 (335 aa).

The ABC transporter domain occupies 2–242; the sequence is IEFHNVHKTY…PQHATTRRFV (241 aa). 38–45 contributes to the ATP binding site; the sequence is GHSGAGKS.

This sequence belongs to the ABC transporter superfamily. Methionine importer (TC 3.A.1.24) family. In terms of assembly, the complex is composed of two ATP-binding proteins (MetN), two transmembrane proteins (MetI) and a solute-binding protein (MetQ).

Its subcellular location is the cell inner membrane. It catalyses the reaction L-methionine(out) + ATP + H2O = L-methionine(in) + ADP + phosphate + H(+). The enzyme catalyses D-methionine(out) + ATP + H2O = D-methionine(in) + ADP + phosphate + H(+). Its function is as follows. Part of the ABC transporter complex MetNIQ involved in methionine import. Responsible for energy coupling to the transport system. This Pseudomonas syringae pv. syringae (strain B728a) protein is Methionine import ATP-binding protein MetN 1.